The following is a 355-amino-acid chain: MSKQQAQFTNPETPGYVGFANLPNQVHRKSVRKGFEFTLMVVGESGLGKSTLINSLFLTDLYPERVVPGAADKIERTVEIEASTVEIEERGVKLRLTVVDTPGYGDAMNCVDCFKPIISYVDNQFERYLHDESGLNRRHIVDNRVHCCFYFISPFGHGLKPLDVEFMKALHNKVNIVPVIAKADTLTLRERERLKRRVLDEIEEHGIKIYQLPDAESDEDEDFKEQTRLLKASIPFTVVGSNQLIEAKGKKVRGRLYPWGVVEVENPEHNDFLKLRTMLITHMQDLQEVTQDLHYENFRSERLKKGVASKVENVEVTKDQILQEKEAELRRMQEMIARMQAQMQIQSQSGDAQHL.

The Septin-type G domain occupies 33–305; the sequence is KGFEFTLMVV…ENFRSERLKK (273 aa). The G1 motif stretch occupies residues 43–50; it reads GESGLGKS. Residues 43-50, Thr-77, Gly-103, 182-190, Gly-240, and Arg-255 each bind GTP; these read GESGLGKS and KADTLTLRE. A G3 motif region spans residues 100 to 103; that stretch reads DTPG. Residues 181 to 184 form a G4 motif region; it reads AKAD. The important for dimerization stretch occupies residues 259 to 269; that stretch reads WGVVEVENPEH.

Belongs to the TRAFAC class TrmE-Era-EngA-EngB-Septin-like GTPase superfamily. Septin GTPase family. As to quaternary structure, septins polymerize into heterooligomeric protein complexes that form filaments, and associate with cellular membranes, actin filaments and microtubules. GTPase activity is required for filament formation. Can form heterooligomers with other family members and form filaments. Interacts with wdpcp.

It localises to the cytoplasm. Its subcellular location is the cytoskeleton. The protein resides in the spindle. The protein localises to the cleavage furrow. It is found in the midbody. It localises to the cell cortex. Its subcellular location is the cell projection. The protein resides in the cilium membrane. Filament-forming cytoskeletal GTPase. Required for normal organization of the actin cytoskeleton. Plays a role in the biogenesis of polarized columnar-shaped epithelium. Required for the progression through mitosis through regulation of chromosome congression. During anaphase, may be required for chromosome segregation and spindle elongation. Plays a role in ciliogenesis and collective cell movements including convergent extension during gastrulation. In cilia, required for the integrity of the diffusion barrier at the base of the primary cilium that prevents diffusion of transmembrane proteins between the cilia and plasma membranes. Controls cell shape and not polarization of cells during convergent extension. The sequence is that of Septin-2B (sept2-B) from Xenopus tropicalis (Western clawed frog).